A 134-amino-acid chain; its full sequence is Arginine decarboxylase proenzyme (134 aa).

Serine 82 serves as the catalytic Schiff-base intermediate with substrate; via pyruvic acid. Pyruvic acid (Ser); by autocatalysis is present on serine 82. The active-site Proton acceptor; for processing activity is histidine 87. Cysteine 102 (proton donor; for catalytic activity) is an active-site residue.

This sequence belongs to the prokaryotic AdoMetDC family. Type 1 subfamily. As to quaternary structure, heterooctamer of four alpha and four beta chains arranged as a tetramer of alpha/beta heterodimers. Pyruvate serves as cofactor. Is synthesized initially as an inactive proenzyme. Formation of the active enzyme involves a self-maturation process in which the active site pyruvoyl group is generated from an internal serine residue via an autocatalytic post-translational modification. Two non-identical subunits are generated from the proenzyme in this reaction, and the pyruvate is formed at the N-terminus of the alpha chain, which is derived from the carboxyl end of the proenzyme. The post-translation cleavage follows an unusual pathway, termed non-hydrolytic serinolysis, in which the side chain hydroxyl group of the serine supplies its oxygen atom to form the C-terminus of the beta chain, while the remainder of the serine residue undergoes an oxidative deamination to produce ammonia and the pyruvoyl group blocking the N-terminus of the alpha chain.

It catalyses the reaction L-arginine + H(+) = agmatine + CO2. It functions in the pathway amine and polyamine biosynthesis; agmatine biosynthesis; agmatine from L-arginine: step 1/1. With respect to regulation, highly competitively inhibited by L-argininamide and L-arginine methyl ester. Also inhibited by alpha-difluoromethylarginine. Is not stimulated by potassium chloride as observed for other decarboxylases. Specifically catalyzes the decarboxylation of L-arginine to agmatine. Is also able to decarboxylate L-canavanine, although less efficiently. Has no S-adenosylmethionine decarboxylase (AdoMetDC) activity. In Saccharolobus solfataricus (strain ATCC 35092 / DSM 1617 / JCM 11322 / P2) (Sulfolobus solfataricus), this protein is Arginine decarboxylase proenzyme.